The chain runs to 513 residues: ATP synthase subunit alpha (513 aa).

ATP is bound at residue 169-176 (GDRQCGKT).

Belongs to the ATPase alpha/beta chains family. As to quaternary structure, F-type ATPases have 2 components, CF(1) - the catalytic core - and CF(0) - the membrane proton channel. CF(1) has five subunits: alpha(3), beta(3), gamma(1), delta(1), epsilon(1). CF(0) has three main subunits: a(1), b(2) and c(9-12). The alpha and beta chains form an alternating ring which encloses part of the gamma chain. CF(1) is attached to CF(0) by a central stalk formed by the gamma and epsilon chains, while a peripheral stalk is formed by the delta and b chains.

It localises to the cell inner membrane. It carries out the reaction ATP + H2O + 4 H(+)(in) = ADP + phosphate + 5 H(+)(out). In terms of biological role, produces ATP from ADP in the presence of a proton gradient across the membrane. The alpha chain is a regulatory subunit. This chain is ATP synthase subunit alpha, found in Burkholderia cenocepacia (strain ATCC BAA-245 / DSM 16553 / LMG 16656 / NCTC 13227 / J2315 / CF5610) (Burkholderia cepacia (strain J2315)).